A 141-amino-acid polypeptide reads, in one-letter code: Nucleoside diphosphate kinase (141 aa).

ATP-binding residues include Lys-11, Phe-59, Arg-87, Thr-93, Arg-104, and Asn-114. His-117 acts as the Pros-phosphohistidine intermediate in catalysis.

This sequence belongs to the NDK family. In terms of assembly, homotetramer. Mg(2+) serves as cofactor.

The protein resides in the cytoplasm. The enzyme catalyses a 2'-deoxyribonucleoside 5'-diphosphate + ATP = a 2'-deoxyribonucleoside 5'-triphosphate + ADP. The catalysed reaction is a ribonucleoside 5'-diphosphate + ATP = a ribonucleoside 5'-triphosphate + ADP. In terms of biological role, major role in the synthesis of nucleoside triphosphates other than ATP. The ATP gamma phosphate is transferred to the NDP beta phosphate via a ping-pong mechanism, using a phosphorylated active-site intermediate. The sequence is that of Nucleoside diphosphate kinase from Legionella pneumophila subsp. pneumophila (strain Philadelphia 1 / ATCC 33152 / DSM 7513).